Reading from the N-terminus, the 450-residue chain is Ribosomal protein uS12 methylthiotransferase RimO (450 aa).

Residues 9-124 (NRINVVTLGC…LLSALEADYK (116 aa)) enclose the MTTase N-terminal domain. 6 residues coordinate [4Fe-4S] cluster: C18, C53, C87, C148, C152, and C155. Residues 134-365 (TTPKNYAYLK…EIQSQISWEL (232 aa)) enclose the Radical SAM core domain. Residues 367 to 434 (QQKIGEVFNV…DFDLYGEPLN (68 aa)) form the TRAM domain.

This sequence belongs to the methylthiotransferase family. RimO subfamily. It depends on [4Fe-4S] cluster as a cofactor.

The protein localises to the cytoplasm. It carries out the reaction L-aspartate(89)-[ribosomal protein uS12]-hydrogen + (sulfur carrier)-SH + AH2 + 2 S-adenosyl-L-methionine = 3-methylsulfanyl-L-aspartate(89)-[ribosomal protein uS12]-hydrogen + (sulfur carrier)-H + 5'-deoxyadenosine + L-methionine + A + S-adenosyl-L-homocysteine + 2 H(+). Catalyzes the methylthiolation of an aspartic acid residue of ribosomal protein uS12. The polypeptide is Ribosomal protein uS12 methylthiotransferase RimO (Christiangramia forsetii (strain DSM 17595 / CGMCC 1.15422 / KT0803) (Gramella forsetii)).